A 312-amino-acid polypeptide reads, in one-letter code: MFKSGSGSLKRSGSISSVKSFSGDSEKGLPPISRGSVSITSQNYEPLIVPANSSSFAAASDFVPEKTKSEGNLKNKSSVITGNFESSGPTNAHYNQNADGDRLVENLLLKEIAKGRGPSTSDARHTATDSRLSQEVKQPFSEENAGGNDLNTGRGSHGTGDGIEQYHKSDCEERMSAYHKRVVDTFFKYFEYSAEDGHSTLYSDVAFLFGCGDLDLLVMSRYQEVMTLRARSAIYGIFCYLQALTAYLTYLGAKVGQVIMLDEELEKYEIRLDVAQDDDPIVFQITTGVFTSGVAHDLRKLTQILEAFSLER.

The segment covering 1–23 (MFKSGSGSLKRSGSISSVKSFSG) has biased composition (low complexity). 3 disordered regions span residues 1-37 (MFKS…RGSV), 63-97 (VPEK…YNQN), and 114-162 (KGRG…TGDG). Over residues 63-73 (VPEKTKSEGNL) the composition is skewed to basic and acidic residues. A compositionally biased stretch (polar residues) spans 74-97 (KNKSSVITGNFESSGPTNAHYNQN). Basic and acidic residues predominate over residues 122-134 (DARHTATDSRLSQ).

Belongs to the phytoreovirus non-structural protein Pns12A family.

It localises to the host cytoplasm. In terms of biological role, constituent of viral factories. The sequence is that of Non-structural protein 12A from Rice dwarf virus (isolate Fujian) (RDV).